We begin with the raw amino-acid sequence, 756 residues long: Anaphase-promoting complex subunit 5 (756 aa).

4 TPR repeats span residues 301 to 334 (RYAALNLAALHCRFGHYQQAELALQEAIRIAQES), 522 to 555 (DGRYHIADSLVAGITALNSIEGMYRKAIVLKAQN), 581 to 614 (ISVLLSVAELYWRSSCHTIALPVLLQALAFSREY), and 678 to 711 (YSQQKKAEALESAILNLNEAKTYLAKVDCKEQLR).

It belongs to the APC5 family. In terms of assembly, the APC/C is composed of at least 12 subunits.

It is found in the nucleus. It localises to the cytoplasm. The protein localises to the cytoskeleton. Its subcellular location is the spindle. The protein operates within protein modification; protein ubiquitination. Component of the anaphase promoting complex/cyclosome (APC/C), a cell cycle-regulated E3 ubiquitin ligase that controls progression through mitosis and the G1 phase of the cell cycle. The APC/C complex acts by mediating ubiquitination and subsequent degradation of target proteins: it mainly mediates the formation of 'Lys-11'-linked polyubiquitin chains and, to a lower extent, the formation of 'Lys-48'- and 'Lys-63'-linked polyubiquitin chains. The APC/C complex catalyzes assembly of branched 'Lys-11'-/'Lys-48'-linked branched ubiquitin chains on target proteins. The polypeptide is Anaphase-promoting complex subunit 5 (ANAPC5) (Gallus gallus (Chicken)).